The following is a 311-amino-acid chain: uncharacterized protein (311 aa).

This sequence belongs to the peptidase C1 family.

This is an uncharacterized protein from Acanthamoeba polyphaga mimivirus (APMV).